The primary structure comprises 496 residues: MTNKTLMIQGTTSDAGKSTLVTAICRSLLRRGVKVAPFKPQNMALNSAVTVDGGEIGRAQAVQAQACGLQPHTDMNPVLLKPNTDIGAQVIIHGKARANMDAVAYHDYKRTAMQAVLESFQRLSSAYDAVLVEGAGSPAEINLRDRDIANMGFAEEVDCPVILVADIDRGGVFAHLVGTLALLSESEQRRVRGFVINRFRGDIALLEPGLRWLEEYTGKPVLGVLPYLNGLHLEAEDALPRDSIVKSDATLKVIAPALPRISNHTDFDPLRLHPQVDFQFIGPGQSPPPADLIILPGSKSVRNDLQWLRENGWEEVIRKHLRYGGRVIGICGGYQMLGRSIADPHGLEGVAGESVGLGWLDIATTLEPEKQLRRVEGRLWLDDARITGYEIHAGVTRCLASQTSAVCLEDGRLDGVVSDDNQVLGLYLHGLFESPQALTALLRWAGLNEVQRLDYDALREADINRLADVVDQYLNWEEIAGFLQVGPNSDDRESRA.

The 188-residue stretch at 250 to 437 (TLKVIAPALP…LHGLFESPQA (188 aa)) folds into the GATase cobBQ-type domain. The active-site Nucleophile is the cysteine 331. Residue histidine 429 is part of the active site.

It belongs to the CobB/CobQ family. CobQ subfamily.

Its pathway is cofactor biosynthesis; adenosylcobalamin biosynthesis. In terms of biological role, catalyzes amidations at positions B, D, E, and G on adenosylcobyrinic A,C-diamide. NH(2) groups are provided by glutamine, and one molecule of ATP is hydrogenolyzed for each amidation. This is Cobyric acid synthase from Hahella chejuensis (strain KCTC 2396).